The primary structure comprises 292 residues: Peroxisomal 2,4-dienoyl-CoA reductase SPS19 [(3E)-enoyl-CoA-producing] (292 aa).

NADP(+)-binding residues include isoleucine 36, aspartate 85, and lysine 145. Serine 162 serves as the catalytic Proton donor. Lysine 180 provides a ligand contact to NADP(+). The active-site Lowers pKa of active site Tyr is lysine 180. Lysine 188 is covalently cross-linked (Glycyl lysine isopeptide (Lys-Gly) (interchain with G-Cter in ubiquitin)). Residue isoleucine 209 participates in NADP(+) binding. A Microbody targeting signal motif is present at residues 290 to 292 (SKL).

The protein belongs to the short-chain dehydrogenases/reductases (SDR) family. In terms of assembly, homodimer.

The protein resides in the peroxisome. It carries out the reaction a (2E,4Z)-dienoyl-CoA + NADPH + H(+) = a 4,5-saturated-(3E)-enoyl-CoA + NADP(+). The enzyme catalyses a (2E,4E)-dienoyl-CoA + NADPH + H(+) = a 4,5-saturated-(3E)-enoyl-CoA + NADP(+). Its function is as follows. Auxiliary enzyme of beta-oxidation. Participates in the degradation of unsaturated fatty enoyl-CoA esters having double bonds in both even- and odd-numbered positions in peroxisome. Catalyzes the NADP-dependent reduction of 2,4-dienoyl-CoA to yield trans-3-enoyl-CoA. Dispensable for growth and sporulation on solid acetate and oleate media, but is essential for these processes to occur on petroselineate. The protein is Peroxisomal 2,4-dienoyl-CoA reductase SPS19 [(3E)-enoyl-CoA-producing] (SPS19) of Saccharomyces cerevisiae (strain ATCC 204508 / S288c) (Baker's yeast).